A 188-amino-acid polypeptide reads, in one-letter code: F-box only protein 36 (188 aa).

In terms of domain architecture, F-box spans Phe91–Ile137.

As to quaternary structure, directly interacts with SKP1 and CUL1.

Substrate-recognition component of the SCF (SKP1-CUL1-F-box protein)-type E3 ubiquitin ligase complex. This chain is F-box only protein 36 (FBXO36), found in Homo sapiens (Human).